Here is a 265-residue protein sequence, read N- to C-terminus: Indole-3-glycerol phosphate synthase (265 aa).

It belongs to the TrpC family.

The enzyme catalyses 1-(2-carboxyphenylamino)-1-deoxy-D-ribulose 5-phosphate + H(+) = (1S,2R)-1-C-(indol-3-yl)glycerol 3-phosphate + CO2 + H2O. It functions in the pathway amino-acid biosynthesis; L-tryptophan biosynthesis; L-tryptophan from chorismate: step 4/5. The protein is Indole-3-glycerol phosphate synthase of Desulforamulus reducens (strain ATCC BAA-1160 / DSM 100696 / MI-1) (Desulfotomaculum reducens).